A 207-amino-acid polypeptide reads, in one-letter code: Dephospho-CoA kinase (207 aa).

Positions 4-203 constitute a DPCK domain; that stretch reads VIGLTGGIAS…EEGYIEKPNY (200 aa). An ATP-binding site is contributed by 12–17; it reads ASGKST.

The protein belongs to the CoaE family.

It localises to the cytoplasm. The catalysed reaction is 3'-dephospho-CoA + ATP = ADP + CoA + H(+). Its pathway is cofactor biosynthesis; coenzyme A biosynthesis; CoA from (R)-pantothenate: step 5/5. In terms of biological role, catalyzes the phosphorylation of the 3'-hydroxyl group of dephosphocoenzyme A to form coenzyme A. The polypeptide is Dephospho-CoA kinase (Staphylococcus aureus (strain USA300)).